Consider the following 754-residue polypeptide: 84 kDa readthrough protein (754 aa).

Disordered regions lie at residues 103 to 131 (RGEGAQTRNAKRGAAPGTSQVENEEQGQT) and 713 to 740 (KNTRMYPSTSGQSYNSYKSPRVSGKSGV). Residues 713–730 (KNTRMYPSTSGQSYNSYK) show a composition bias toward polar residues.

The protein belongs to the virgaviridae capsid protein family.

Its subcellular location is the virion. Minor capsid protein involved in virus transmission by the vector. The chain is 84 kDa readthrough protein (CP-CP2) from Soil-borne wheat mosaic virus (strain United States/Nebraska/1981) (SBWMV).